A 360-amino-acid chain; its full sequence is 3-dehydroquinate synthase (360 aa).

Residues 70 to 75, 104 to 108, 128 to 129, Lys141, and Lys150 each bind NAD(+); these read DGEKYK, GVIGD, and TT. The Zn(2+) site is built by Glu183, His246, and His263.

This sequence belongs to the sugar phosphate cyclases superfamily. Dehydroquinate synthase family. Requires Co(2+) as cofactor. Zn(2+) is required as a cofactor. The cofactor is NAD(+).

Its subcellular location is the cytoplasm. The catalysed reaction is 7-phospho-2-dehydro-3-deoxy-D-arabino-heptonate = 3-dehydroquinate + phosphate. It functions in the pathway metabolic intermediate biosynthesis; chorismate biosynthesis; chorismate from D-erythrose 4-phosphate and phosphoenolpyruvate: step 2/7. Its function is as follows. Catalyzes the conversion of 3-deoxy-D-arabino-heptulosonate 7-phosphate (DAHP) to dehydroquinate (DHQ). In Acinetobacter baumannii (strain AYE), this protein is 3-dehydroquinate synthase.